Reading from the N-terminus, the 1217-residue chain is Sterol 3-beta-glucosyltransferase (1217 aa).

The GRAM 1 domain maps to 195–232 (EFVRKYFGISEEETLIGHYTGWLLQEVLIQGNLFITNS). The PH domain occupies 246–343 (AVVLCGKLKL…WVKCLKKQLF (98 aa)). The GRAM 2 domain occupies 590–656 (AKIKDWFNLH…EDIEGYNEIL (67 aa)). Residues Ser766, Arg767, Asp769, Asn1042, Ile1072, His1074, His1087, Ser1090, Gly1091, Thr1092, Asp1111, and Gln1112 each contribute to the UDP-alpha-D-glucose site.

It belongs to the glycosyltransferase 28 family.

The protein resides in the cytoplasm. The protein localises to the membrane. It catalyses the reaction a sterol + UDP-alpha-D-glucose = a sterol 3-beta-D-glucoside + UDP + H(+). The catalysed reaction is ergosterol + UDP-alpha-D-glucose = ergosteryl 3-beta-D-glucoside + UDP + H(+). Its function is as follows. Sterol glycosyltransferase responsible for the glycosylation of ergosterol to form ergosterol-glucoside. The sequence is that of Sterol 3-beta-glucosyltransferase from Vanderwaltozyma polyspora (strain ATCC 22028 / DSM 70294 / BCRC 21397 / CBS 2163 / NBRC 10782 / NRRL Y-8283 / UCD 57-17) (Kluyveromyces polysporus).